The following is a 128-amino-acid chain: Anti-sigma-F factor antagonist RsfA (128 aa).

The STAS domain occupies 17–128 (LKATIQHHDS…PTTESALSAT (112 aa)). A disulfide bridge connects residues Cys-73 and Cys-109.

Belongs to the anti-sigma-factor antagonist family. Monomer. Interacts with anti-sigma-F factor RsbW (UsfX).

In terms of biological role, positive, redox-sensitive regulator of sigma-F (SigF) activity. When reduced binds to anti-sigma-F factor RsbW (UsfX) preventing its binding to SigF, thus activating transcription. The chain is Anti-sigma-F factor antagonist RsfA (rsfA) from Mycobacterium tuberculosis (strain CDC 1551 / Oshkosh).